A 403-amino-acid chain; its full sequence is Nucleolar protein 13 (403 aa).

Composition is skewed to basic and acidic residues over residues 1–35 and 75–97; these read MSET…RKAE and KSIE…KDAQ. Disordered regions lie at residues 1 to 43 and 72 to 116; these read MSET…IDLK and IDPK…EVVK. Ser-2 is subject to N-acetylserine. A Phosphoserine modification is found at Ser-2. Over residues 99 to 108 the composition is skewed to polar residues; the sequence is EESTINTPTG. A Phosphothreonine modification is found at Thr-105. RRM domains follow at residues 125–219 and 239–317; these read YGVW…DSEN and RILF…YGED. Basic and acidic residues predominate over residues 313 to 329; the sequence is EYGEDRSKRQVRKKVEN. The tract at residues 313 to 403 is disordered; it reads EYGEDRSKRQ…PSQGKKVKFD (91 aa). A compositionally biased stretch (polar residues) spans 330–344; sequence VSRNNSSSFDISNNK. Ser-335 carries the phosphoserine modification. The segment covering 345-361 has biased composition (basic and acidic residues); that stretch reads GYDRAGQDNGSKPEYKR. Over residues 371 to 381 the composition is skewed to polar residues; that stretch reads DSNNRTKSSVA.

The protein resides in the nucleus. It localises to the nucleolus. This Saccharomyces cerevisiae (strain ATCC 204508 / S288c) (Baker's yeast) protein is Nucleolar protein 13 (NOP13).